Reading from the N-terminus, the 364-residue chain is Pectinesterase (364 aa).

Residues 1–22 (MSCIAVEAVLLGILLYIPIVLS) form the signal peptide. N-linked (GlcNAc...) asparagine glycosylation is present at N103. D220 is a catalytic residue.

The protein localises to the secreted. It catalyses the reaction [(1-&gt;4)-alpha-D-galacturonosyl methyl ester](n) + n H2O = [(1-&gt;4)-alpha-D-galacturonosyl](n) + n methanol + n H(+). It participates in glycan metabolism; pectin degradation; 2-dehydro-3-deoxy-D-gluconate from pectin: step 1/5. Its function is as follows. Catalyzes the demethylesterification of homogalacturonan components of pectin. The chain is Pectinesterase from Parthenium hysterophorus (Santa Maria feverfew).